Here is a 111-residue protein sequence, read N- to C-terminus: Beta-defensin 126 (111 aa).

The first 20 residues, 1-20, serve as a signal peptide directing secretion; the sequence is MKSLLFTLAVFMLLAQLVSG. The segment at 21–63 is in vitro binds to LPS, mediates antimicrobial activity and inhibits LPS-mediated inflammation; sequence NWYVKKCLNDVGICKKKCKPEEMHVKNGWAMCGKQRDCCVPAD. Disulfide bonds link C27–C58, C34–C52, and C38–C59.

It belongs to the beta-defensin family. As to quaternary structure, homodimer or homooligomer; disulfide-linked. Post-translationally, O-glycosylated; glycans contain alpha(2,3)-linked sialic acids.

Its subcellular location is the secreted. In terms of biological role, highly glycosylated atypical beta-defensin involved in several aspects of sperm function. Facilitates sperm transport in the female reproductive tract and contributes to sperm protection against immunodetection; both functions are probably implicating the negative surface charge provided by its O-linked oligosaccharides in the sperm glycocalyx. Involved in binding of sperm to oviductal epithelial cells to form a sperm reservoir until ovulation. Release from the sperm surface during capacitation and ovaluation by an elevation of oviductal fluid pH is unmasking other surface components and allows sperm to penetrate the cumulus matrix and bind to the zona pellucida of the oocyte. In vitro has antimicrobial activity and may inhibit LPS-mediated inflammation. This Gorilla gorilla gorilla (Western lowland gorilla) protein is Beta-defensin 126 (DEFB126).